The primary structure comprises 293 residues: MAWLQIRLNSTDKYAEQISDFLEEIGAVSVTFMDSQDTPIFEPLPGETRLWGNTDVMGLFDAETDMQAVVSALITSGLVTADFAHKVEQIEDKDWEREWMDNFHPMQFGQRLWICPSWREVPDEKAVNIMLDPGLAFGTGTHPTTALCLQWLDGLDLTGKTVIDFGCGSGILAISALKLGAKQAIGIDIDPQAILASQNNAAANGVADRLQLFLAKDQPQALQADVVVANILAGPLKELAPNIMTLVKPQGYLGLSGILATQAQSVCQAYAAVFKLDPVVEKEEWCRITGIKQ.

The S-adenosyl-L-methionine site is built by Thr-145, Gly-166, Asp-188, and Asn-230.

It belongs to the methyltransferase superfamily. PrmA family.

Its subcellular location is the cytoplasm. It carries out the reaction L-lysyl-[protein] + 3 S-adenosyl-L-methionine = N(6),N(6),N(6)-trimethyl-L-lysyl-[protein] + 3 S-adenosyl-L-homocysteine + 3 H(+). Methylates ribosomal protein L11. This is Ribosomal protein L11 methyltransferase from Haemophilus ducreyi (strain 35000HP / ATCC 700724).